We begin with the raw amino-acid sequence, 522 residues long: Maturase K (522 aa).

Belongs to the intron maturase 2 family. MatK subfamily.

It localises to the plastid. The protein localises to the chloroplast. In terms of biological role, usually encoded in the trnK tRNA gene intron. Probably assists in splicing its own and other chloroplast group II introns. This Iris tenax (Oregon iris) protein is Maturase K.